We begin with the raw amino-acid sequence, 429 residues long: 5-methylthioadenosine/S-adenosylhomocysteine deaminase (429 aa).

Zn(2+) contacts are provided by His66 and His68. Residues Glu95, Arg147, Arg158, and His181 each contribute to the substrate site. His208 is a binding site for Zn(2+). Residues Glu211 and Asp296 each contribute to the substrate site. A Zn(2+)-binding site is contributed by Asp296.

This sequence belongs to the metallo-dependent hydrolases superfamily. MTA/SAH deaminase family. Zn(2+) serves as cofactor.

It catalyses the reaction S-adenosyl-L-homocysteine + H2O + H(+) = S-inosyl-L-homocysteine + NH4(+). It carries out the reaction S-methyl-5'-thioadenosine + H2O + H(+) = S-methyl-5'-thioinosine + NH4(+). Functionally, catalyzes the deamination of 5-methylthioadenosine and S-adenosyl-L-homocysteine into 5-methylthioinosine and S-inosyl-L-homocysteine, respectively. Is also able to deaminate adenosine. This is 5-methylthioadenosine/S-adenosylhomocysteine deaminase from Caldicellulosiruptor saccharolyticus (strain ATCC 43494 / DSM 8903 / Tp8T 6331).